The sequence spans 687 residues: Polyphosphate kinase (687 aa).

Asparagine 45 contacts ATP. Residues arginine 375 and arginine 405 each contribute to the Mg(2+) site. Histidine 435 functions as the Phosphohistidine intermediate in the catalytic mechanism. 3 residues coordinate ATP: tyrosine 472, arginine 568, and histidine 596.

The protein belongs to the polyphosphate kinase 1 (PPK1) family. Mg(2+) is required as a cofactor. In terms of processing, an intermediate of this reaction is the autophosphorylated ppk in which a phosphate is covalently linked to a histidine residue through a N-P bond.

The catalysed reaction is [phosphate](n) + ATP = [phosphate](n+1) + ADP. Its function is as follows. Catalyzes the reversible transfer of the terminal phosphate of ATP to form a long-chain polyphosphate (polyP). The protein is Polyphosphate kinase of Burkholderia lata (strain ATCC 17760 / DSM 23089 / LMG 22485 / NCIMB 9086 / R18194 / 383).